The following is a 428-amino-acid chain: 2,3-bisphosphoglycerate-independent phosphoglycerate mutase 2 (428 aa).

This sequence belongs to the BPG-independent phosphoglycerate mutase family. A-PGAM subfamily.

It carries out the reaction (2R)-2-phosphoglycerate = (2R)-3-phosphoglycerate. The protein operates within carbohydrate degradation; glycolysis; pyruvate from D-glyceraldehyde 3-phosphate: step 3/5. Catalyzes the interconversion of 2-phosphoglycerate and 3-phosphoglycerate. In Methanocaldococcus jannaschii (strain ATCC 43067 / DSM 2661 / JAL-1 / JCM 10045 / NBRC 100440) (Methanococcus jannaschii), this protein is 2,3-bisphosphoglycerate-independent phosphoglycerate mutase 2 (apgM2).